The following is a 121-amino-acid chain: Small ribosomal subunit protein uS13 (121 aa).

Residues 88 to 121 (GMRHRRGLPVRGQHTKNNARTRKGKAVAIANKKK) are disordered.

Belongs to the universal ribosomal protein uS13 family. In terms of assembly, part of the 30S ribosomal subunit. Forms a loose heterodimer with protein S19. Forms two bridges to the 50S subunit in the 70S ribosome.

Its function is as follows. Located at the top of the head of the 30S subunit, it contacts several helices of the 16S rRNA. In the 70S ribosome it contacts the 23S rRNA (bridge B1a) and protein L5 of the 50S subunit (bridge B1b), connecting the 2 subunits; these bridges are implicated in subunit movement. Contacts the tRNAs in the A and P-sites. The protein is Small ribosomal subunit protein uS13 of Limosilactobacillus reuteri subsp. reuteri (strain JCM 1112) (Lactobacillus reuteri).